The following is a 348-amino-acid chain: Noscapine synthase SDR1 (348 aa).

It belongs to the NAD(P)-dependent epimerase/dehydratase family.

It catalyses the reaction narcotine hemiacetal + NAD(+) = noscapine + NADH + H(+). It participates in alkaloid biosynthesis. Its function is as follows. Oxidoreductase that catalyzes the last step in the biosynthesis of the benzylisoquinoline alkaloid noscapine. Converts narcotine hemiacetal to noscapine. The protein is Noscapine synthase SDR1 of Papaver somniferum (Opium poppy).